The following is a 458-amino-acid chain: Riboflavin transporter 2 (458 aa).

5 consecutive transmembrane segments (helical) span residues 11–31, 38–58, 73–93, 97–117, and 146–166; these read LFGM…PLIV, WYLP…PLFV, PVIY…AFFW, VPLA…LLSV, and GVSG…VVHC. Asn168, Asn176, Asn182, and Asn199 each carry an N-linked (GlcNAc...) asparagine glycan. The chain crosses the membrane as a helical span at residues 204–224; that stretch reads VFFLFLSAMMVVCLAAFLLLN. The disordered stretch occupies residues 249–274; the sequence is DQALSLSHRPQEEKPMISSPDSHRRA. 5 consecutive transmembrane segments (helical) span residues 279-299, 325-345, 349-369, 388-408, and 417-437; these read FGTG…LAWV, LAAT…MFLP, LVLI…IMAM, IVIA…IIGV, and ALVW…LSMF.

It belongs to the riboflavin transporter family.

The protein localises to the cell membrane. The enzyme catalyses riboflavin(in) = riboflavin(out). Its function is as follows. Plasma membrane transporter mediating the uptake by cells of the water soluble vitamin B2/riboflavin that plays a key role in biochemical oxidation-reduction reactions of the carbohydrate, lipid, and amino acid metabolism. The protein is Riboflavin transporter 2 (rft2) of Salmo salar (Atlantic salmon).